The following is a 137-amino-acid chain: UPF0275 protein PM0489 (137 aa).

The protein belongs to the UPF0275 family.

This is UPF0275 protein PM0489 from Pasteurella multocida (strain Pm70).